Reading from the N-terminus, the 126-residue chain is MGKQATERRLADTEARAITKMIRTSPYKLNLVAESIRGKTAERALAELTFSKRRMADTVKKTLQSAIANAENNHQLDVDQLIVSEAYVGKAMVLKRWRARARGRVGKILKPFSNLTIVVRERGETA.

It belongs to the universal ribosomal protein uL22 family. In terms of assembly, part of the 50S ribosomal subunit.

In terms of biological role, this protein binds specifically to 23S rRNA; its binding is stimulated by other ribosomal proteins, e.g. L4, L17, and L20. It is important during the early stages of 50S assembly. It makes multiple contacts with different domains of the 23S rRNA in the assembled 50S subunit and ribosome. Functionally, the globular domain of the protein is located near the polypeptide exit tunnel on the outside of the subunit, while an extended beta-hairpin is found that lines the wall of the exit tunnel in the center of the 70S ribosome. This Rhodospirillum rubrum (strain ATCC 11170 / ATH 1.1.1 / DSM 467 / LMG 4362 / NCIMB 8255 / S1) protein is Large ribosomal subunit protein uL22.